The primary structure comprises 183 residues: ADP-ribosylation factor 3 (183 aa).

Glycine 2 is lipidated: N-myristoyl glycine. GTP contacts are provided by residues 24 to 31, 67 to 71, and 126 to 129; these read GLDKAGKT, DVGGQ, and NKQD.

The protein belongs to the small GTPase superfamily. Arf family. Interacts with RUD3.

The protein resides in the golgi apparatus. In terms of biological role, GTP-binding protein involved in protein trafficking; may modulate vesicle budding and uncoating within the Golgi apparatus. This chain is ADP-ribosylation factor 3 (ARF3), found in Saccharomyces cerevisiae (strain ATCC 204508 / S288c) (Baker's yeast).